A 725-amino-acid chain; its full sequence is Polyribonucleotide nucleotidyltransferase (725 aa).

Mg(2+)-binding residues include aspartate 487 and aspartate 493. In terms of domain architecture, KH spans proline 554 to isoleucine 613. Positions glycine 623–lysine 691 constitute an S1 motif domain. A disordered region spans residues glutamate 699 to glutamate 725. The span at leucine 701–alanine 719 shows a compositional bias: basic and acidic residues.

Belongs to the polyribonucleotide nucleotidyltransferase family. Mg(2+) is required as a cofactor.

The protein localises to the cytoplasm. The enzyme catalyses RNA(n+1) + phosphate = RNA(n) + a ribonucleoside 5'-diphosphate. In terms of biological role, involved in mRNA degradation. Catalyzes the phosphorolysis of single-stranded polyribonucleotides processively in the 3'- to 5'-direction. This Methylobacterium sp. (strain 4-46) protein is Polyribonucleotide nucleotidyltransferase.